Here is a 65-residue protein sequence, read N- to C-terminus: Hirudin-3A (65 aa).

The interaction with thrombin active site stretch occupies residues 1 to 3; the sequence is VVY. 3 cysteine pairs are disulfide-bonded: C6–C14, C16–C28, and C22–C39. The segment at 39-65 is disordered; sequence CVTGEGTPKPQSHNDGDFEEIPEEYLQ. T45 carries O-linked (GalNAc...) threonine glycosylation. The segment at 55 to 65 is interaction with fibrinogen-binding exosite of thrombin; the sequence is DFEEIPEEYLQ. A compositionally biased stretch (acidic residues) spans 55–65; the sequence is DFEEIPEEYLQ. Y63 is subject to Sulfotyrosine.

It belongs to the protease inhibitor I14 (hirudin) family.

The protein resides in the secreted. Its function is as follows. Hirudin is a potent thrombin-specific protease inhibitor. It forms a stable non-covalent complex with alpha-thrombin, thereby abolishing its ability to cleave fibrinogen. The protein is Hirudin-3A of Hirudo medicinalis (Medicinal leech).